The primary structure comprises 447 residues: MLHRYLPMTEEDKKEMLQTIGVQTIDELFSDIPESVRFKGDLKIKEAKSEPELLKELSQMASKNANLKEYASFLGAGVYDHYAPVIVDHVISRSEFYTAYTPYQPEISQGELQAIFEFQTMICELTGMDVANSSMYDGGTALAEAAMLAAGHTRKKKILVSSAVHPESRAVLETYAKGQHLEVVEINHKDGVTDLDVLQSEVDDTVACVIVQYPNFFGQVEKLADIEKIVHQQKSLFIVSSNPLSLGALTPPGKFGADIVIGDAQPFGIPTQFGGPHCGYFATTKAFMRKIPGRLVGQTVDSDGKRGFVLTLQAREQHIRRDKATSNICSNQALNALAASVAMTALGKQGVKEMARQNISKAQYAKRQFEAKGFTVTFAGPFFNEFVVDCKRPVKEVNDALLQKNIIGGYDLGRDYKEHENHMLVAVTELRTKEEIDTLVNEMGAIQ.

The protein belongs to the GcvP family. N-terminal subunit subfamily. As to quaternary structure, the glycine cleavage system is composed of four proteins: P, T, L and H. In this organism, the P 'protein' is a heterodimer of two subunits.

The catalysed reaction is N(6)-[(R)-lipoyl]-L-lysyl-[glycine-cleavage complex H protein] + glycine + H(+) = N(6)-[(R)-S(8)-aminomethyldihydrolipoyl]-L-lysyl-[glycine-cleavage complex H protein] + CO2. Functionally, the glycine cleavage system catalyzes the degradation of glycine. The P protein binds the alpha-amino group of glycine through its pyridoxal phosphate cofactor; CO(2) is released and the remaining methylamine moiety is then transferred to the lipoamide cofactor of the H protein. In Bacillus anthracis (strain A0248), this protein is Probable glycine dehydrogenase (decarboxylating) subunit 1.